Reading from the N-terminus, the 527-residue chain is GMP synthase [glutamine-hydrolyzing] (527 aa).

A Glutamine amidotransferase type-1 domain is found at 4 to 202 (KILILDFGSQ…VLKICGAKPD (199 aa)). Cys81 acts as the Nucleophile in catalysis. Residues His176 and Glu178 contribute to the active site. One can recognise a GMPS ATP-PPase domain in the interval 203-395 (WEMGNYIDEA…LGLPPSMVYR (193 aa)). 230 to 236 (SGGVDSS) provides a ligand contact to ATP.

As to quaternary structure, homodimer.

It catalyses the reaction XMP + L-glutamine + ATP + H2O = GMP + L-glutamate + AMP + diphosphate + 2 H(+). The protein operates within purine metabolism; GMP biosynthesis; GMP from XMP (L-Gln route): step 1/1. Catalyzes the synthesis of GMP from XMP. This is GMP synthase [glutamine-hydrolyzing] from Paraburkholderia phymatum (strain DSM 17167 / CIP 108236 / LMG 21445 / STM815) (Burkholderia phymatum).